The chain runs to 376 residues: Cinnamyl alcohol dehydrogenase 2 (376 aa).

C44 serves as a coordination point for Zn(2+). Residue S46 coordinates NADP(+). The Zn(2+) site is built by H66, E67, C97, C100, C103, C111, and C161. Residues T165, 187-192 (GLGGLG), 210-215 (SRSSEK), T250, G274, and 297-299 (SQI) each bind NADP(+).

It belongs to the zinc-containing alcohol dehydrogenase family. In terms of assembly, homodimer. Requires Zn(2+) as cofactor. In terms of tissue distribution, expressed at the base of the stems.

The catalysed reaction is (E)-cinnamyl alcohol + NADP(+) = (E)-cinnamaldehyde + NADPH + H(+). It carries out the reaction (E)-coniferol + NADP(+) = (E)-coniferaldehyde + NADPH + H(+). The enzyme catalyses (E)-sinapyl alcohol + NADP(+) = (E)-sinapaldehyde + NADPH + H(+). It catalyses the reaction (E)-4-coumaroyl alcohol + NADP(+) = (E)-4-coumaraldehyde + NADPH + H(+). The catalysed reaction is (E)-caffeyl alcohol + NADP(+) = (E)-caffeyl aldehyde + NADPH + H(+). Its pathway is aromatic compound metabolism; phenylpropanoid biosynthesis. Involved in lignin biosynthesis. Catalyzes the final step specific for the production of lignin monomers. Catalyzes the NADPH-dependent reduction of coniferaldehyde, 5-hydroxyconiferaldehyde, sinapaldehyde, 4-coumaraldehyde and caffeyl aldehyde to their respective alcohols. The polypeptide is Cinnamyl alcohol dehydrogenase 2 (Arabidopsis thaliana (Mouse-ear cress)).